Here is a 292-residue protein sequence, read N- to C-terminus: Homoserine kinase (292 aa).

81–91 (RPRSGLGSSGA) lines the ATP pocket.

This sequence belongs to the GHMP kinase family. Homoserine kinase subfamily.

The protein resides in the cytoplasm. It catalyses the reaction L-homoserine + ATP = O-phospho-L-homoserine + ADP + H(+). Its pathway is amino-acid biosynthesis; L-threonine biosynthesis; L-threonine from L-aspartate: step 4/5. Its function is as follows. Catalyzes the ATP-dependent phosphorylation of L-homoserine to L-homoserine phosphate. In Thermococcus gammatolerans (strain DSM 15229 / JCM 11827 / EJ3), this protein is Homoserine kinase.